Here is an 85-residue protein sequence, read N- to C-terminus: Small cysteine and glycine repeat-containing protein 5 (85 aa).

The segment at 4-69 (CGCGGCGGCG…TCCSCGCGCG (66 aa)) is 10 X 2 AA repeats of CG.

It belongs to the KRTAP type 28 family.

Functionally, in the hair cortex, hair keratin intermediate filaments are embedded in an interfilamentous matrix, consisting of hair keratin-associated proteins (KRTAP), which are essential for the formation of a rigid and resistant hair shaft through their extensive disulfide bond cross-linking with abundant cysteine residues of hair keratins. The matrix proteins include the high-sulfur and high-glycine-tyrosine keratins. This chain is Small cysteine and glycine repeat-containing protein 5, found in Homo sapiens (Human).